The chain runs to 360 residues: Sphingolipid delta(4)-desaturase (360 aa).

3 helical membrane-spanning segments follow: residues 67 to 87 (AVVL…VLSF), 89 to 109 (FLAL…LCIH), and 125 to 145 (LFAI…FQPY). The Histidine box-1 motif lies at 109–113 (HELSH). The short motif at 146-150 (HQLHH) is the Histidine box-2 element. The next 3 helical transmembrane spans lie at 170–190 (VLSS…FYAL), 202–222 (FIHL…IKFG), and 228–248 (WYLI…GHFI). Positions 288 to 292 (HNEHH) match the Histidine box-3 motif.

This sequence belongs to the fatty acid desaturase type 1 family. DEGS subfamily.

It is found in the membrane. The catalysed reaction is an N-acylsphinganine + 2 Fe(II)-[cytochrome b5] + O2 + 2 H(+) = an N-acylsphing-4-enine + 2 Fe(III)-[cytochrome b5] + 2 H2O. The protein operates within lipid metabolism; sphingolipid metabolism. In terms of biological role, delta(4)-fatty-acid desaturase which introduces a double bond at the 4-position in the long-chain base (LCB) of ceramides. Required for the formation of the monounsaturated sphingoid base (E)-sphing-4-enine during glucosylceramide (GluCer) biosynthesis. The polypeptide is Sphingolipid delta(4)-desaturase (Komagataella phaffii (strain GS115 / ATCC 20864) (Yeast)).